The chain runs to 375 residues: 23S rRNA (uracil(747)-C(5))-methyltransferase RlmC (375 aa).

Residues C3, C11, C14, and C87 each coordinate [4Fe-4S] cluster. Q212, F241, E262, and N307 together coordinate S-adenosyl-L-methionine. The Nucleophile role is filled by C334.

It belongs to the class I-like SAM-binding methyltransferase superfamily. RNA M5U methyltransferase family. RlmC subfamily.

It carries out the reaction uridine(747) in 23S rRNA + S-adenosyl-L-methionine = 5-methyluridine(747) in 23S rRNA + S-adenosyl-L-homocysteine + H(+). Its function is as follows. Catalyzes the formation of 5-methyl-uridine at position 747 (m5U747) in 23S rRNA. This chain is 23S rRNA (uracil(747)-C(5))-methyltransferase RlmC, found in Escherichia coli (strain SE11).